The sequence spans 283 residues: Pantothenate synthetase (283 aa).

34 to 41 (MGALHEGH) contacts ATP. His-41 functions as the Proton donor in the catalytic mechanism. Residue Gln-65 coordinates (R)-pantoate. Residue Gln-65 coordinates beta-alanine. Position 152–155 (152–155 (GEKD)) interacts with ATP. Gln-158 provides a ligand contact to (R)-pantoate. 189–192 (MSSR) lines the ATP pocket.

This sequence belongs to the pantothenate synthetase family. In terms of assembly, homodimer.

It localises to the cytoplasm. It carries out the reaction (R)-pantoate + beta-alanine + ATP = (R)-pantothenate + AMP + diphosphate + H(+). Its pathway is cofactor biosynthesis; (R)-pantothenate biosynthesis; (R)-pantothenate from (R)-pantoate and beta-alanine: step 1/1. Functionally, catalyzes the condensation of pantoate with beta-alanine in an ATP-dependent reaction via a pantoyl-adenylate intermediate. This Rhodopseudomonas palustris (strain BisA53) protein is Pantothenate synthetase.